The primary structure comprises 869 residues: Leucine--tRNA ligase (869 aa).

A 'HIGH' region motif is present at residues 42 to 52; sequence PYPSGNLHMGH. A 'KMSKS' region motif is present at residues 622-626; the sequence is KMSKS. Lys-625 lines the ATP pocket.

Belongs to the class-I aminoacyl-tRNA synthetase family.

Its subcellular location is the cytoplasm. The enzyme catalyses tRNA(Leu) + L-leucine + ATP = L-leucyl-tRNA(Leu) + AMP + diphosphate. The polypeptide is Leucine--tRNA ligase (Synechocystis sp. (strain ATCC 27184 / PCC 6803 / Kazusa)).